The chain runs to 189 residues: Inner membrane-spanning protein YciB (189 aa).

5 consecutive transmembrane segments (helical) span residues 23–43, 54–74, 82–102, 120–140, and 150–170; these read ILLATLVLIPATLAQVAFVWW, ITLALVVVMGGATVIFHDAAF, VNWLFAFAFLVAPLFGGKTLI, LNLAWVAFFIALGAINVYVFK, and FKLFGMLGLTLLFVLGQGVYL.

Belongs to the YciB family.

It is found in the cell inner membrane. Plays a role in cell envelope biogenesis, maintenance of cell envelope integrity and membrane homeostasis. In Chromohalobacter salexigens (strain ATCC BAA-138 / DSM 3043 / CIP 106854 / NCIMB 13768 / 1H11), this protein is Inner membrane-spanning protein YciB.